A 76-amino-acid polypeptide reads, in one-letter code: Acyl carrier protein (76 aa).

The 76-residue stretch at 1–76 (MSVEEKVKKI…DAIDYIAGKQ (76 aa)) folds into the Carrier domain. Ser36 carries the post-translational modification O-(pantetheine 4'-phosphoryl)serine.

The protein belongs to the acyl carrier protein (ACP) family. In terms of processing, 4'-phosphopantetheine is transferred from CoA to a specific serine of apo-ACP by AcpS. This modification is essential for activity because fatty acids are bound in thioester linkage to the sulfhydryl of the prosthetic group.

It is found in the cytoplasm. Its pathway is lipid metabolism; fatty acid biosynthesis. In terms of biological role, carrier of the growing fatty acid chain in fatty acid biosynthesis. This chain is Acyl carrier protein, found in Oleidesulfovibrio alaskensis (strain ATCC BAA-1058 / DSM 17464 / G20) (Desulfovibrio alaskensis).